The primary structure comprises 129 residues: Large ribosomal subunit protein bL20 (129 aa).

The protein belongs to the bacterial ribosomal protein bL20 family.

Functionally, binds directly to 23S ribosomal RNA and is necessary for the in vitro assembly process of the 50S ribosomal subunit. It is not involved in the protein synthesizing functions of that subunit. This chain is Large ribosomal subunit protein bL20, found in Rhodococcus jostii (strain RHA1).